We begin with the raw amino-acid sequence, 278 residues long: Ribosomal RNA small subunit methyltransferase A (278 aa).

S-adenosyl-L-methionine-binding residues include Asn-27, Leu-29, Gly-54, Glu-75, Asp-101, and Asn-122.

It belongs to the class I-like SAM-binding methyltransferase superfamily. rRNA adenine N(6)-methyltransferase family. RsmA subfamily.

The protein resides in the cytoplasm. It catalyses the reaction adenosine(1518)/adenosine(1519) in 16S rRNA + 4 S-adenosyl-L-methionine = N(6)-dimethyladenosine(1518)/N(6)-dimethyladenosine(1519) in 16S rRNA + 4 S-adenosyl-L-homocysteine + 4 H(+). Its function is as follows. Specifically dimethylates two adjacent adenosines (A1518 and A1519) in the loop of a conserved hairpin near the 3'-end of 16S rRNA in the 30S particle. May play a critical role in biogenesis of 30S subunits. In Brucella anthropi (strain ATCC 49188 / DSM 6882 / CCUG 24695 / JCM 21032 / LMG 3331 / NBRC 15819 / NCTC 12168 / Alc 37) (Ochrobactrum anthropi), this protein is Ribosomal RNA small subunit methyltransferase A.